Here is a 401-residue protein sequence, read N- to C-terminus: Homeobox protein engrailed-1 (401 aa).

Disordered regions lie at residues 1–102 (MEEQ…PAAQ), 138–167 (GGGA…HSLG), 229–253 (SKPS…AKFP), and 293–315 (RPSS…DKRP). Low complexity predominate over residues 13 to 48 (DSGLGAVAAAAPSGLSLSLSPGASGSSGSDGDSVPV). 2 stretches are compositionally biased toward pro residues: residues 49 to 64 (SPQP…PCLP) and 73 to 88 (PPHP…PPPQ). A compositionally biased stretch (low complexity) spans 89-102 (HLAAPAHQPQPAAQ). 2 stretches are compositionally biased toward gly residues: residues 138-147 (GGGAAAGGGS) and 234-243 (SGGGSGGNAG). Positions 312 to 371 (DKRPRTAFTAEQLQRLKAEFQANRYITEQRRQTLAQELSLNESQIKIWFQNKRAKIKKAT) form a DNA-binding region, homeobox.

It belongs to the engrailed homeobox family.

The protein localises to the nucleus. Required for proper formation of the apical ectodermal ridge and correct dorsal-ventral patterning in the limb. The sequence is that of Homeobox protein engrailed-1 (En1) from Mus musculus (Mouse).